The chain runs to 127 residues: Small ribosomal subunit protein uS11 (127 aa).

Belongs to the universal ribosomal protein uS11 family. Part of the 30S ribosomal subunit. Interacts with proteins S7 and S18. Binds to IF-3.

In terms of biological role, located on the platform of the 30S subunit, it bridges several disparate RNA helices of the 16S rRNA. Forms part of the Shine-Dalgarno cleft in the 70S ribosome. In Lactococcus lactis subsp. lactis (strain IL1403) (Streptococcus lactis), this protein is Small ribosomal subunit protein uS11.